The chain runs to 466 residues: Ribulose bisphosphate carboxylase/oxygenase activase, chloroplastic (466 aa).

A chloroplast-targeting transit peptide spans 1-48; sequence MAAAFSSTVGAPASTPTNFLGKKLKKQVTSAVNYHGKSSNINRFKVMA. 156–163 is a binding site for ATP; that stretch reads GGKGQGKS. Residues 429–454 are disordered; the sequence is QGAQQAGNLPVPEGCTDPVAKNFDPT.

The protein belongs to the RuBisCO activase family.

It is found in the plastid. It localises to the chloroplast stroma. Functionally, activation of RuBisCO (ribulose-1,5-bisphosphate carboxylase/oxygenase; EC 4.1.1.39) involves the ATP-dependent carboxylation of the epsilon-amino group of lysine leading to a carbamate structure. The protein is Ribulose bisphosphate carboxylase/oxygenase activase, chloroplastic (RCA) of Oryza sativa subsp. japonica (Rice).